A 171-amino-acid polypeptide reads, in one-letter code: Neudesin (171 aa).

Residues 1–30 (MARPAPWWRLRLLAALVLALALVPVPSAWA) form the signal peptide. Residues 43–128 (VRLFTEEELA…KELEALDDVF (86 aa)) enclose the Cytochrome b5 heme-binding domain. Lysine 135 carries the N6-acetyllysine modification.

This sequence belongs to the cytochrome b5 family. MAPR subfamily. In terms of assembly, interacts with PINK1 and PARK7. In terms of tissue distribution, in the embryo, expressed most abundantly in brain and spinal cord. Widely expressed in adult tissues including brain, heart, lung and kidney. In brain, expressed in neurons but not in glial cells. In the hypothalamus is expressed primarily in the paraventricular nucleus (PVN), with lower levels of expression in the arcuate nucleus (ARC).

The protein resides in the secreted. It is found in the extracellular space. The protein localises to the mitochondrion. Its subcellular location is the endoplasmic reticulum. Its function is as follows. Acts as a neurotrophic factor in postnatal mature neurons, enhancing neuronal survival. Promotes cell proliferation and neurogenesis in undifferentiated neural pro-genitor cells at the embryonic stage and inhibits differentiation of astrocytes. Its neurotrophic activity is exerted via MAPK1/ERK2, MAPK3/ERK1 and AKT1/AKT pathways. Neurotrophic activity is enhanced by binding to heme. Also acts as an anorexigenic neurotrophic factor that contributes to energy balance. This chain is Neudesin, found in Mus musculus (Mouse).